The following is a 983-amino-acid chain: UPF0746 protein DDB_G0280809 (983 aa).

A compositionally biased stretch (basic and acidic residues) spans Met1–Asp21. Residues Met1 to Ile26 are disordered. An SAP domain is found at Ser42–Phe76. The tract at residues His391–Thr413 is disordered. Residues Thr392 to Thr413 are compositionally biased toward low complexity.

This sequence belongs to the UPF0746 family.

The chain is UPF0746 protein DDB_G0280809 from Dictyostelium discoideum (Social amoeba).